A 553-amino-acid polypeptide reads, in one-letter code: Glycerol-3-phosphate dehydrogenase (553 aa).

Position 13-41 (13-41) interacts with FAD; it reads DLIVIGGGINGVGTARDGALRGLKTLLIE.

Belongs to the FAD-dependent glycerol-3-phosphate dehydrogenase family. Requires FAD as cofactor.

It is found in the cytoplasm. The catalysed reaction is a quinone + sn-glycerol 3-phosphate = dihydroxyacetone phosphate + a quinol. This chain is Glycerol-3-phosphate dehydrogenase (glpD), found in Synechocystis sp. (strain ATCC 27184 / PCC 6803 / Kazusa).